Reading from the N-terminus, the 170-residue chain is Calcineurin subunit B type 1 (170 aa).

EF-hand domains are found at residues 18-46 (DEIR…FMSL), 50-85 (QQNP…FSVR), 87-122 (DKLS…MVGN), and 128-163 (QLQQ…TDIH). Positions 31, 33, 35, 42, 63, 65, 67, 69, 74, 100, 102, 104, 106, 111, 141, 143, 145, 147, and 152 each coordinate Ca(2+).

This sequence belongs to the calcineurin regulatory subunit family. As to quaternary structure, composed of two components (A and B), the A component is the catalytic subunit and the B component confers calcium sensitivity.

In terms of biological role, calcineurin is a calcium-binding and calmodulin-binding protein found in all cells from yeast to mammals, and a calcium-dependent, calmodulin-stimulated protein phosphatase. The chain is Calcineurin subunit B type 1 (CanB) from Drosophila melanogaster (Fruit fly).